The chain runs to 468 residues: Sorting and assembly machinery component 50 homolog (468 aa).

The disordered stretch occupies residues 1–24 (MGTVHARSLDPLPMNGPDFGSHDD). Residues 44–124 (VVVQRVHFEG…LDVTFEVTEL (81 aa)) enclose the POTRA domain.

The protein belongs to the SAM50/omp85 family. Associates with the mitochondrial contact site and cristae organizing system (MICOS) complex (also known as MINOS or MitOS complex).

It is found in the mitochondrion outer membrane. Its function is as follows. May play a role in the maintenance of the structure of mitochondrial cristae. The chain is Sorting and assembly machinery component 50 homolog (samm50) from Xenopus tropicalis (Western clawed frog).